Reading from the N-terminus, the 103-residue chain is Large ribosomal subunit protein uL24 (103 aa).

This sequence belongs to the universal ribosomal protein uL24 family. As to quaternary structure, part of the 50S ribosomal subunit.

Its function is as follows. One of two assembly initiator proteins, it binds directly to the 5'-end of the 23S rRNA, where it nucleates assembly of the 50S subunit. One of the proteins that surrounds the polypeptide exit tunnel on the outside of the subunit. The protein is Large ribosomal subunit protein uL24 of Sinorhizobium medicae (strain WSM419) (Ensifer medicae).